We begin with the raw amino-acid sequence, 344 residues long: S-adenosylmethionine:tRNA ribosyltransferase-isomerase (344 aa).

It belongs to the QueA family. Monomer.

It is found in the cytoplasm. It catalyses the reaction 7-aminomethyl-7-carbaguanosine(34) in tRNA + S-adenosyl-L-methionine = epoxyqueuosine(34) in tRNA + adenine + L-methionine + 2 H(+). The protein operates within tRNA modification; tRNA-queuosine biosynthesis. Its function is as follows. Transfers and isomerizes the ribose moiety from AdoMet to the 7-aminomethyl group of 7-deazaguanine (preQ1-tRNA) to give epoxyqueuosine (oQ-tRNA). The polypeptide is S-adenosylmethionine:tRNA ribosyltransferase-isomerase (Lactiplantibacillus plantarum (strain ATCC BAA-793 / NCIMB 8826 / WCFS1) (Lactobacillus plantarum)).